The following is a 708-amino-acid chain: Polyribonucleotide nucleotidyltransferase (708 aa).

Aspartate 486 and aspartate 492 together coordinate Mg(2+). A KH domain is found at 553 to 612; that stretch reads PRITTIKVPPQKVREVIGSGGKVIREITEVTGTKIDIEDDGTIKIASADAEATQRAVDWI. One can recognise an S1 motif domain in the interval 622-690; it reads GVVYTGKVVK…DRGKIKLSMK (69 aa).

It belongs to the polyribonucleotide nucleotidyltransferase family. Requires Mg(2+) as cofactor.

Its subcellular location is the cytoplasm. It catalyses the reaction RNA(n+1) + phosphate = RNA(n) + a ribonucleoside 5'-diphosphate. In terms of biological role, involved in mRNA degradation. Catalyzes the phosphorolysis of single-stranded polyribonucleotides processively in the 3'- to 5'-direction. The polypeptide is Polyribonucleotide nucleotidyltransferase (Rhodospirillum rubrum (strain ATCC 11170 / ATH 1.1.1 / DSM 467 / LMG 4362 / NCIMB 8255 / S1)).